Consider the following 106-residue polypeptide: UPF0060 membrane protein R01043 (106 aa).

The next 4 helical transmembrane spans lie at 5–25 (AIYFLAALAEITGCFAFWSWL), 31–51 (ALWLIPGMASLALFAWLLTMV), 61–81 (AAYGGVYIVASLSWLWLAEGV), and 85–105 (HWDMTGAAVALAGSAIILAGP).

Belongs to the UPF0060 family.

Its subcellular location is the cell inner membrane. This chain is UPF0060 membrane protein R01043, found in Rhizobium meliloti (strain 1021) (Ensifer meliloti).